The following is a 418-amino-acid chain: D-amino acid dehydrogenase (418 aa).

FAD is bound at residue V3–Y17.

This sequence belongs to the DadA oxidoreductase family. FAD serves as cofactor.

It catalyses the reaction a D-alpha-amino acid + A + H2O = a 2-oxocarboxylate + AH2 + NH4(+). Its pathway is amino-acid degradation; D-alanine degradation; NH(3) and pyruvate from D-alanine: step 1/1. Functionally, oxidative deamination of D-amino acids. In Granulibacter bethesdensis (strain ATCC BAA-1260 / CGDNIH1), this protein is D-amino acid dehydrogenase.